An 89-amino-acid polypeptide reads, in one-letter code: Large ribosomal subunit protein uL23c (89 aa).

It belongs to the universal ribosomal protein uL23 family. As to quaternary structure, part of the 50S ribosomal subunit.

It is found in the plastid. Its subcellular location is the chloroplast. Functionally, binds to 23S rRNA. In Zygnema circumcarinatum (Green alga), this protein is Large ribosomal subunit protein uL23c (rpl23).